We begin with the raw amino-acid sequence, 338 residues long: tRNA N6-adenosine threonylcarbamoyltransferase (338 aa).

His111 and His115 together coordinate Fe cation. Substrate-binding positions include 134–138, Asp167, Gly180, and Asn272; that span reads LVSGG. Asp300 contacts Fe cation.

Belongs to the KAE1 / TsaD family. The cofactor is Fe(2+).

The protein localises to the cytoplasm. It carries out the reaction L-threonylcarbamoyladenylate + adenosine(37) in tRNA = N(6)-L-threonylcarbamoyladenosine(37) in tRNA + AMP + H(+). Functionally, required for the formation of a threonylcarbamoyl group on adenosine at position 37 (t(6)A37) in tRNAs that read codons beginning with adenine. Is involved in the transfer of the threonylcarbamoyl moiety of threonylcarbamoyl-AMP (TC-AMP) to the N6 group of A37, together with TsaE and TsaB. TsaD likely plays a direct catalytic role in this reaction. The protein is tRNA N6-adenosine threonylcarbamoyltransferase of Shewanella halifaxensis (strain HAW-EB4).